The primary structure comprises 288 residues: ATP synthase gamma chain (288 aa).

This sequence belongs to the ATPase gamma chain family. As to quaternary structure, F-type ATPases have 2 components, CF(1) - the catalytic core - and CF(0) - the membrane proton channel. CF(1) has five subunits: alpha(3), beta(3), gamma(1), delta(1), epsilon(1). CF(0) has three main subunits: a, b and c.

The protein localises to the cell inner membrane. Functionally, produces ATP from ADP in the presence of a proton gradient across the membrane. The gamma chain is believed to be important in regulating ATPase activity and the flow of protons through the CF(0) complex. The sequence is that of ATP synthase gamma chain from Polaromonas naphthalenivorans (strain CJ2).